A 496-amino-acid chain; its full sequence is Angiopoietin-2 (496 aa).

Positions 1 to 18 (MWQIVFFTLSCDLVLAAA) are cleaved as a signal peptide. N-linked (GlcNAc...) asparagine glycans are attached at residues N89, N119, N133, N151, N240, and N304. Positions 166-248 (STNKLEKQIL…VNNSVLQKQQ (83 aa)) form a coiled coil. Positions 275-495 (KEEQISFRDC…ATTMMIRPAD (221 aa)) constitute a Fibrinogen C-terminal domain. The cysteines at positions 284 and 313 are disulfide-linked. Ca(2+)-binding residues include D429, D431, C433, and C435. Disulfide bonds link C433/C435 and C437/C450.

Interacts with TEK/TIE2, competing for the same binding site as ANGPT1. Interacts with ITGA5. Interacts with SVEP1/polydom. Interacts with THBD; this interaction significantly inhibits the generation of activated PC and TAFIa/CPB2 by the thrombin/thrombomodulin complex.

The protein resides in the secreted. In terms of biological role, binds to TEK/TIE2, competing for the ANGPT1 binding site, and modulating ANGPT1 signaling. Can induce tyrosine phosphorylation of TEK/TIE2 in the absence of ANGPT1. In the absence of angiogenic inducers, such as VEGF, ANGPT2-mediated loosening of cell-matrix contacts may induce endothelial cell apoptosis with consequent vascular regression. In concert with VEGF, it may facilitate endothelial cell migration and proliferation, thus serving as a permissive angiogenic signal. Involved in the regulation of lymphangiogenesis. In Homo sapiens (Human), this protein is Angiopoietin-2 (ANGPT2).